The primary structure comprises 394 residues: S-adenosylmethionine synthase 3 (394 aa).

Glu11 lines the Mg(2+) pocket. An ATP-binding site is contributed by His17. K(+) is bound at residue Glu45. Residues Glu58 and Gln101 each contribute to the L-methionine site. Residues 169–171 (DGK), 237–240 (SGRF), Asp248, 254–255 (RK), Ala271, Lys275, and Lys279 each bind ATP. Residue Asp248 participates in L-methionine binding. Lys279 is a binding site for L-methionine.

The protein belongs to the AdoMet synthase family. As to quaternary structure, homotetramer. It depends on Mn(2+) as a cofactor. The cofactor is Mg(2+). Requires Co(2+) as cofactor. K(+) serves as cofactor.

The protein resides in the cytoplasm. The enzyme catalyses L-methionine + ATP + H2O = S-adenosyl-L-methionine + phosphate + diphosphate. It participates in amino-acid biosynthesis; S-adenosyl-L-methionine biosynthesis; S-adenosyl-L-methionine from L-methionine: step 1/1. In terms of biological role, catalyzes the formation of S-adenosylmethionine from methionine and ATP. The reaction comprises two steps that are both catalyzed by the same enzyme: formation of S-adenosylmethionine (AdoMet) and triphosphate, and subsequent hydrolysis of the triphosphate. This chain is S-adenosylmethionine synthase 3 (SAM3), found in Hordeum vulgare (Barley).